The sequence spans 304 residues: Sulfate adenylyltransferase subunit 2 (304 aa).

This sequence belongs to the PAPS reductase family. CysD subfamily. Heterodimer composed of CysD, the smaller subunit, and CysNC.

It catalyses the reaction sulfate + ATP + H(+) = adenosine 5'-phosphosulfate + diphosphate. It functions in the pathway sulfur metabolism; hydrogen sulfide biosynthesis; sulfite from sulfate: step 1/3. Functionally, with CysN forms the ATP sulfurylase (ATPS) that catalyzes the adenylation of sulfate producing adenosine 5'-phosphosulfate (APS) and diphosphate, the first enzymatic step in sulfur assimilation pathway. APS synthesis involves the formation of a high-energy phosphoric-sulfuric acid anhydride bond driven by GTP hydrolysis by CysN coupled to ATP hydrolysis by CysD. The sequence is that of Sulfate adenylyltransferase subunit 2 from Xylella fastidiosa (strain Temecula1 / ATCC 700964).